We begin with the raw amino-acid sequence, 96 residues long: NADH-ubiquinone oxidoreductase chain 4L (96 aa).

3 helical membrane-spanning segments follow: residues 1-21, 27-47, and 57-77; these read MPTT…SLQR, LLLT…LWAL, and APLI…SLMI.

It belongs to the complex I subunit 4L family.

It is found in the mitochondrion membrane. It catalyses the reaction a ubiquinone + NADH + 5 H(+)(in) = a ubiquinol + NAD(+) + 4 H(+)(out). Its function is as follows. Core subunit of the mitochondrial membrane respiratory chain NADH dehydrogenase (Complex I) which catalyzes electron transfer from NADH through the respiratory chain, using ubiquinone as an electron acceptor. Part of the enzyme membrane arm which is embedded in the lipid bilayer and involved in proton translocation. In Petromyzon marinus (Sea lamprey), this protein is NADH-ubiquinone oxidoreductase chain 4L (MT-ND4L).